Reading from the N-terminus, the 21-residue chain is Sarafotoxin-D (21 aa).

2 cysteine pairs are disulfide-bonded: cysteine 1–cysteine 15 and cysteine 3–cysteine 11.

The protein belongs to the endothelin/sarafotoxin family. Expressed by the venom gland.

It is found in the secreted. Its function is as follows. Vasoconstrictor activity. These toxins cause cardiac arrest probably as a result of coronary vasospasm. May act by displaying agonistic activities towards endothelin-1 and -2 receptors (EDNRA and EDNRB). This is Sarafotoxin-D from Atractaspis engaddensis (Israeli burrowing asp).